Here is a 670-residue protein sequence, read N- to C-terminus: Catalase (670 aa).

Residues histidine 61 and asparagine 132 contribute to the active site. Residue tyrosine 345 participates in heme binding.

This sequence belongs to the catalase family. Homotetramer. The cofactor is heme.

It localises to the peroxisome matrix. The enzyme catalyses 2 H2O2 = O2 + 2 H2O. Functionally, catalyzes the degradation of hydrogen peroxide (H(2)O(2)) generated by peroxisomal oxidases to water and oxygen, thereby protecting cells from the toxic effects of hydrogen peroxide. In Penicillium janthinellum (Penicillium vitale), this protein is Catalase.